The sequence spans 139 residues: Low molecular weight protein-tyrosine-phosphatase PtpB (139 aa).

Cysteine 7 (nucleophile) is an active-site residue. Residue arginine 13 is part of the active site. The active-site Proton donor is aspartate 111.

This sequence belongs to the low molecular weight phosphotyrosine protein phosphatase family.

The enzyme catalyses O-phospho-L-tyrosyl-[protein] + H2O = L-tyrosyl-[protein] + phosphate. Its activity is regulated as follows. Inhibited by N-ethylmaleimide and sodium orthovanadate. Dephosphorylates the phosphotyrosine-containing proteins. In Staphylococcus aureus, this protein is Low molecular weight protein-tyrosine-phosphatase PtpB (ptpB).